Consider the following 437-residue polypeptide: GTPase Era, mitochondrial (437 aa).

A mitochondrion-targeting transit peptide spans 1–20 (MAAPRRYFPGIVRALLGAWQ). An Era-type G domain is found at 112-330 (RVLRVVLLGA…QYLLTQAQPG (219 aa)). The G1 stretch occupies residues 120–127 (GAPNAGKS). 120–127 (GAPNAGKS) lines the GTP pocket. A G2 region spans residues 146–150 (HTTRC). Positions 167-170 (DTPG) are G3. Position 167-171 (167-171 (DTPGI)) interacts with GTP. S173 carries the post-translational modification Phosphoserine. Residue 236–239 (NKVD) coordinates GTP. Residues 236–239 (NKVD) form a G4 region. The disordered stretch occupies residues 272-293 (SRPSTHCPGPETEDPNTHAVRS). Positions 308-310 (LSA) are G5. One can recognise a KH type-2 domain in the interval 360 to 437 (LPEEVPYSVQ…LLRLSVKLLK (78 aa)).

The protein belongs to the TRAFAC class TrmE-Era-EngA-EngB-Septin-like GTPase superfamily. Era GTPase family.

The protein resides in the mitochondrion matrix. It is found in the mitochondrion inner membrane. Its function is as follows. Probable GTPase that plays a role in the mitochondrial ribosomal small subunit assembly. Specifically binds the 12S mitochondrial rRNA (12S mt-rRNA) to a 33 nucleotide section delineating the 3' terminal stem-loop region. May act as a chaperone that protects the 12S mt-rRNA on the 28S mitoribosomal subunit during ribosomal small subunit assembly. The chain is GTPase Era, mitochondrial (Eral1) from Rattus norvegicus (Rat).